Here is a 1022-residue protein sequence, read N- to C-terminus: rDNA transcriptional regulator POL5 (1022 aa).

3 stretches are compositionally biased toward acidic residues: residues 706-719 (EEFE…DASE), 728-748 (SESE…EDEA), and 781-802 (DLDQ…ESMD). 2 disordered regions span residues 706 to 748 (EEFE…EDEA) and 778 to 805 (GEVD…DDEK). Serine 789 is modified (phosphoserine).

It belongs to the MYBBP1A family. Interacts with FRK1.

The protein resides in the nucleus. It is found in the nucleolus. The catalysed reaction is DNA(n) + a 2'-deoxyribonucleoside 5'-triphosphate = DNA(n+1) + diphosphate. Its activity is regulated as follows. Stimulated by PCNA and inhibited by aphidicolin. Plays an important role in the regulation of rRNA transcription. Binds near or at the enhancer region of rRNA repeating units. May have DNA polymerase activity, but it is not required for in vivo function. This chain is rDNA transcriptional regulator POL5, found in Saccharomyces cerevisiae (strain ATCC 204508 / S288c) (Baker's yeast).